A 480-amino-acid polypeptide reads, in one-letter code: Ribosomal RNA small subunit methyltransferase F (480 aa).

Residues 126–132 (AAAPGSK), glutamate 150, aspartate 177, and aspartate 195 contribute to the S-adenosyl-L-methionine site. Cysteine 248 acts as the Nucleophile in catalysis.

Belongs to the class I-like SAM-binding methyltransferase superfamily. RsmB/NOP family.

Its subcellular location is the cytoplasm. It catalyses the reaction cytidine(1407) in 16S rRNA + S-adenosyl-L-methionine = 5-methylcytidine(1407) in 16S rRNA + S-adenosyl-L-homocysteine + H(+). In terms of biological role, specifically methylates the cytosine at position 1407 (m5C1407) of 16S rRNA. The protein is Ribosomal RNA small subunit methyltransferase F of Cronobacter sakazakii (strain ATCC BAA-894) (Enterobacter sakazakii).